The primary structure comprises 206 residues: MIDPDGYRPNVGIVLMRQDGQVFWARRVRRDGWQFPQGGMNTDETPVEAMYRELQEETGLLPEHVEVLGATPGWLRYKLPARAIRRNERQVCIGQKQVWFLLRLTGDESHVKLDHTDSPEFDHWRWVDFWYPVEHVVMFKRGVYARALRHLAPLARGVAGQGVTAMPKSAAEAWMPGHTAGHDRPRKRPRTRGYWPKKATGDGPAS.

Residues 6-149 (GYRPNVGIVL…KRGVYARALR (144 aa)) form the Nudix hydrolase domain. Positions 38–59 (GGMNTDETPVEAMYRELQEETG) match the Nudix box motif. The interval 175–206 (MPGHTAGHDRPRKRPRTRGYWPKKATGDGPAS) is disordered.

The protein belongs to the Nudix hydrolase family. RppH subfamily. The cofactor is a divalent metal cation.

Functionally, accelerates the degradation of transcripts by removing pyrophosphate from the 5'-end of triphosphorylated RNA, leading to a more labile monophosphorylated state that can stimulate subsequent ribonuclease cleavage. In Stenotrophomonas maltophilia (strain K279a), this protein is RNA pyrophosphohydrolase.